A 102-amino-acid polypeptide reads, in one-letter code: RNA-binding protein Hfq (102 aa).

The region spanning 9-68 (DPFLNALRRERVPVSIYLVNGIKLQGQIESFDQFVILLKNTVSQMVYKHAISTVVPSRPV) is the Sm domain. A disordered region spans residues 63 to 102 (VPSRPVSHHSNNAGGGASNNYHHGSNAQGSTAQQDSEETE). The segment covering 70–88 (HHSNNAGGGASNNYHHGSN) has biased composition (low complexity).

It belongs to the Hfq family. As to quaternary structure, homohexamer.

Functionally, RNA chaperone that binds small regulatory RNA (sRNAs) and mRNAs to facilitate mRNA translational regulation in response to envelope stress, environmental stress and changes in metabolite concentrations. Also binds with high specificity to tRNAs. The polypeptide is RNA-binding protein Hfq (Salmonella agona (strain SL483)).